The following is a 362-amino-acid chain: Aminomethyltransferase (362 aa).

The protein belongs to the GcvT family. The glycine cleavage system is composed of four proteins: P, T, L and H.

It carries out the reaction N(6)-[(R)-S(8)-aminomethyldihydrolipoyl]-L-lysyl-[protein] + (6S)-5,6,7,8-tetrahydrofolate = N(6)-[(R)-dihydrolipoyl]-L-lysyl-[protein] + (6R)-5,10-methylene-5,6,7,8-tetrahydrofolate + NH4(+). Its function is as follows. The glycine cleavage system catalyzes the degradation of glycine. The protein is Aminomethyltransferase of Chromobacterium violaceum (strain ATCC 12472 / DSM 30191 / JCM 1249 / CCUG 213 / NBRC 12614 / NCIMB 9131 / NCTC 9757 / MK).